Here is a 108-residue protein sequence, read N- to C-terminus: ATP synthase peripheral stalk subunit F6, mitochondrial (108 aa).

A mitochondrion-targeting transit peptide spans 1 to 32; that stretch reads MILQRLFRFSSIIRSAVSVHFRRNIGVTAVAF. Lys-41, Lys-46, and Lys-79 each carry N6-acetyllysine. An N6-acetyllysine; alternate mark is found at Lys-84, Lys-94, and Lys-99. 3 positions are modified to N6-succinyllysine; alternate: Lys-84, Lys-94, and Lys-99. The residue at position 105 (Lys-105) is an N6-acetyllysine.

Belongs to the eukaryotic ATPase subunit F6 family. Component of the ATP synthase complex composed at least of ATP5F1A/subunit alpha, ATP5F1B/subunit beta, ATP5MC1/subunit c (homooctomer), MT-ATP6/subunit a, MT-ATP8/subunit 8, ATP5ME/subunit e, ATP5MF/subunit f, ATP5MG/subunit g, ATP5MK/subunit k, ATP5MJ/subunit j, ATP5F1C/subunit gamma, ATP5F1D/subunit delta, ATP5F1E/subunit epsilon, ATP5PF/subunit F6, ATP5PB/subunit b, ATP5PD/subunit d, ATP5PO/subunit OSCP. ATP synthase complex consists of a soluble F(1) head domain (subunits alpha(3) and beta(3)) - the catalytic core - and a membrane F(0) domain - the membrane proton channel (subunits c, a, 8, e, f, g, k and j). These two domains are linked by a central stalk (subunits gamma, delta, and epsilon) rotating inside the F1 region and a stationary peripheral stalk (subunits F6, b, d, and OSCP).

It is found in the mitochondrion. The protein resides in the mitochondrion inner membrane. Subunit F6, of the mitochondrial membrane ATP synthase complex (F(1)F(0) ATP synthase or Complex V) that produces ATP from ADP in the presence of a proton gradient across the membrane which is generated by electron transport complexes of the respiratory chain. ATP synthase complex consist of a soluble F(1) head domain - the catalytic core - and a membrane F(1) domain - the membrane proton channel. These two domains are linked by a central stalk rotating inside the F(1) region and a stationary peripheral stalk. During catalysis, ATP synthesis in the catalytic domain of F(1) is coupled via a rotary mechanism of the central stalk subunits to proton translocation. In vivo, can only synthesize ATP although its ATP hydrolase activity can be activated artificially in vitro. Part of the complex F(0) domain. Part of the complex F(0) domain and the peripheric stalk, which acts as a stator to hold the catalytic alpha(3)beta(3) subcomplex and subunit a/ATP6 static relative to the rotary elements. In Macaca fascicularis (Crab-eating macaque), this protein is ATP synthase peripheral stalk subunit F6, mitochondrial.